We begin with the raw amino-acid sequence, 244 residues long: 1-(5-phosphoribosyl)-5-[(5-phosphoribosylamino)methylideneamino] imidazole-4-carboxamide isomerase (244 aa).

Catalysis depends on Asp-7, which acts as the Proton acceptor. The active-site Proton donor is the Asp-129.

This sequence belongs to the HisA/HisF family.

Its subcellular location is the cytoplasm. It catalyses the reaction 1-(5-phospho-beta-D-ribosyl)-5-[(5-phospho-beta-D-ribosylamino)methylideneamino]imidazole-4-carboxamide = 5-[(5-phospho-1-deoxy-D-ribulos-1-ylimino)methylamino]-1-(5-phospho-beta-D-ribosyl)imidazole-4-carboxamide. It participates in amino-acid biosynthesis; L-histidine biosynthesis; L-histidine from 5-phospho-alpha-D-ribose 1-diphosphate: step 4/9. The polypeptide is 1-(5-phosphoribosyl)-5-[(5-phosphoribosylamino)methylideneamino] imidazole-4-carboxamide isomerase (Pseudoalteromonas atlantica (strain T6c / ATCC BAA-1087)).